The sequence spans 134 residues: L-ectoine synthase (134 aa).

It belongs to the ectoine synthase family.

It carries out the reaction (2S)-4-acetamido-2-aminobutanoate = L-ectoine + H2O. The protein operates within amine and polyamine biosynthesis; ectoine biosynthesis; L-ectoine from L-aspartate 4-semialdehyde: step 3/3. Catalyzes the circularization of gamma-N-acetyl-alpha,gamma-diaminobutyric acid (ADABA) to ectoine (1,4,5,6-tetrahydro-2-methyl-4-pyrimidine carboxylic acid), which is an excellent osmoprotectant. This is L-ectoine synthase (ectC) from Sporosarcina pasteurii (Bacillus pasteurii).